We begin with the raw amino-acid sequence, 192 residues long: MGVKVGVLALQGDVAEHIAAFREALAERPGSSVAPIRRAEDLADLDALAIPGGESTTISRLMGKNGLYEPVAEFEGGVFATCAGMVLSADRVDDPRVRPLSLIPMHVARNAFGRQVDSRETMLEVAGLAEPFRAVFIRAPVATEAGDGVEVLARIPEGIVAVRHGRHMAFAFHPELGGDLRLHRVFLEGLEV.

Residue 53–55 (GES) coordinates L-glutamine. The active-site Nucleophile is the Cys-82. Residues Arg-109 and 137-138 (IR) each bind L-glutamine. Residues His-173 and Glu-175 each act as charge relay system in the active site.

It belongs to the glutaminase PdxT/SNO family. As to quaternary structure, in the presence of PdxS, forms a dodecamer of heterodimers. Only shows activity in the heterodimer.

The catalysed reaction is aldehydo-D-ribose 5-phosphate + D-glyceraldehyde 3-phosphate + L-glutamine = pyridoxal 5'-phosphate + L-glutamate + phosphate + 3 H2O + H(+). It carries out the reaction L-glutamine + H2O = L-glutamate + NH4(+). Its pathway is cofactor biosynthesis; pyridoxal 5'-phosphate biosynthesis. Catalyzes the hydrolysis of glutamine to glutamate and ammonia as part of the biosynthesis of pyridoxal 5'-phosphate. The resulting ammonia molecule is channeled to the active site of PdxS. The polypeptide is Pyridoxal 5'-phosphate synthase subunit PdxT (Methanoculleus marisnigri (strain ATCC 35101 / DSM 1498 / JR1)).